The sequence spans 518 residues: MIEDISKKIAWLKKNPKMLKGIFRGIERETLRIQKNGHFSKTIHPYLIGSSLTHKWITTDFSENLLEFITPTSDNIDYLLSFLTDLHSFTASKIKNERMWPFSIPYCFNDQTNIQIAQYGKSNIGKMKTTYRIGLKNRYGDLINTISGIHYNFSLPLFFWTNWENNQNKKNNTDLISSGYLNLIRNYYRFGWIVPYLFGSSPAISSFFLKDTKKKYKFKKNKEDIFYLPWSTSLRLSDIGYSNTNILDLNIMFNDFNEYIESFQNALKTPSKKFINIGLKDEHGNFKQLNTNILQIENELYTQIRPKRKTKDGESLLEALKNRGIEYVEIRSLDVNPFSPIGINKNQILLLDLFLIWCALIDSPKIDKTDFLLTTKNWERIIYEGRKPNQKIYINNNNETKTLIEIGQIIFKDLNEIALILDSNSNNLLYQKACKETQLFLKNPELTYSAQCLNFLMTTGIKKTGLYLANKYHEKFINKNYFNLNQSVLEQEVIRSHQKKIEIEREDILSFEEYIRNK.

The protein belongs to the glutamate--cysteine ligase type 1 family. Type 1 subfamily.

It carries out the reaction L-cysteine + L-glutamate + ATP = gamma-L-glutamyl-L-cysteine + ADP + phosphate + H(+). The protein operates within sulfur metabolism; glutathione biosynthesis; glutathione from L-cysteine and L-glutamate: step 1/2. This chain is Glutamate--cysteine ligase, found in Buchnera aphidicola subsp. Acyrthosiphon pisum (strain 5A).